Consider the following 199-residue polypeptide: Cytochrome c oxidase assembly protein CtaG (199 aa).

At 1 to 12 the chain is on the cytoplasmic side; it reads MTNTPQTPPKER. A helical; Signal-anchor for type II membrane protein transmembrane segment spans residues 13–35; that stretch reads ANGVIVGACLAFVAGMVGMAYAA. Residues 36–199 are Periplasmic-facing; it reads VPLYDMFCRV…VKDGETENRL (164 aa).

The protein belongs to the COX11/CtaG family.

It is found in the cell inner membrane. Functionally, exerts its effect at some terminal stage of cytochrome c oxidase synthesis, probably by being involved in the insertion of the copper B into subunit I. The sequence is that of Cytochrome c oxidase assembly protein CtaG from Sinorhizobium fredii (strain NBRC 101917 / NGR234).